Reading from the N-terminus, the 305-residue chain is Probable 5-dehydro-4-deoxyglucarate dehydratase (305 aa).

The protein belongs to the DapA family.

It catalyses the reaction 5-dehydro-4-deoxy-D-glucarate + H(+) = 2,5-dioxopentanoate + CO2 + H2O. Its pathway is carbohydrate acid metabolism; D-glucarate degradation; 2,5-dioxopentanoate from D-glucarate: step 2/2. The protein is Probable 5-dehydro-4-deoxyglucarate dehydratase of Xanthomonas campestris pv. campestris (strain 8004).